The primary structure comprises 197 residues: Transcription factor FapR (197 aa).

It belongs to the FapR family.

Functionally, transcriptional factor involved in regulation of membrane lipid biosynthesis by repressing genes involved in fatty acid and phospholipid metabolism. The polypeptide is Transcription factor FapR (Bacillus cytotoxicus (strain DSM 22905 / CIP 110041 / 391-98 / NVH 391-98)).